A 98-amino-acid polypeptide reads, in one-letter code: Large ribosomal subunit protein uL23 (98 aa).

The protein belongs to the universal ribosomal protein uL23 family. In terms of assembly, part of the 50S ribosomal subunit. Contacts protein L29, and trigger factor when it is bound to the ribosome.

In terms of biological role, one of the early assembly proteins it binds 23S rRNA. One of the proteins that surrounds the polypeptide exit tunnel on the outside of the ribosome. Forms the main docking site for trigger factor binding to the ribosome. The chain is Large ribosomal subunit protein uL23 from Sorangium cellulosum (strain So ce56) (Polyangium cellulosum (strain So ce56)).